Here is a 206-residue protein sequence, read N- to C-terminus: MSSSLSQTSKYQATSVVNGLLSNLLPGVPKIRANNGKTSVNNGSKAQLIDRNLKKRVQLQNRDVHKIKKKCKLVKKKQVKKHKLDKEQLEQLAKHQVLKKHQQEGTLTDHERKYLNKLIKRNSQNLRSWDLEEEVRDELEDIQQSILKDTVSTANTDRSKRRRFKRKQFKEDIKGSDFVKDHRYPGLTPGLAPVGLSDEEDSSEED.

A disordered region spans residues 178–206; it reads FVKDHRYPGLTPGLAPVGLSDEEDSSEED. Phosphoserine occurs at positions 197, 202, and 203. The span at 197 to 206 shows a compositional bias: acidic residues; it reads SDEEDSSEED.

Belongs to the RRT14 family.

It localises to the nucleus. The protein resides in the nucleolus. Involved in ribosome biogenesis, probably through modulation of rDNA transcription. The sequence is that of Regulator of rDNA transcription 14 (RRT14) from Saccharomyces cerevisiae (strain RM11-1a) (Baker's yeast).